The chain runs to 134 residues: MWSDPIADMLTRIRNANVVFKDQVDIPASNLKKEIAEILKREGFIKDYTYIEDGKQGIIRIQMKYKGTRRNRERVIHGIVRISKPGRRIYVDKEHLPKVKNGLGIAILTTSKGVITDKQAREIGVGGEVIAYIW.

It belongs to the universal ribosomal protein uS8 family. As to quaternary structure, part of the 30S ribosomal subunit. Contacts proteins S5 and S12.

One of the primary rRNA binding proteins, it binds directly to 16S rRNA central domain where it helps coordinate assembly of the platform of the 30S subunit. The sequence is that of Small ribosomal subunit protein uS8 from Thermosipho melanesiensis (strain DSM 12029 / CIP 104789 / BI429).